The primary structure comprises 466 residues: Neuronal acetylcholine receptor subunit non-alpha-3 (466 aa).

Residues 1–28 (MKLQISGLLLVTAVAYATIEAPEEFVSL) form the signal peptide. The Extracellular portion of the chain corresponds to 29–235 (AEMEDTLLRN…VTYSFILKRL (207 aa)). N-linked (GlcNAc...) asparagine glycans are attached at residues Asn54, Asn141, Asn169, and Asn208. A disulfide bridge links Cys156 with Cys170. The next 3 helical transmembrane spans lie at 236–260 (PLFYTLFLIIPCLGLSFLTVLVFYL), 268–285 (LLLSTSVLVSLTVFLLVI), and 302–323 (YLLFIMIFVTFSIIVTLFVINV). Residues 324–438 (HHRSSATYHP…WKFVAQVLDR (115 aa)) are Cytoplasmic-facing. Residues 439 to 456 (IFLWVFLTASVLGTILIF) traverse the membrane as a helical segment.

It belongs to the ligand-gated ion channel (TC 1.A.9) family. Acetylcholine receptor (TC 1.A.9.1) subfamily. In terms of assembly, neuronal AChR seems to be composed of two different type of subunits: alpha and non-alpha (beta). Retina, tectum and brain.

It is found in the postsynaptic cell membrane. It localises to the cell membrane. After binding acetylcholine, the AChR responds by an extensive change in conformation that affects all subunits and leads to opening of an ion-conducting channel across the plasma membrane. The sequence is that of Neuronal acetylcholine receptor subunit non-alpha-3 from Carassius auratus (Goldfish).